The following is a 332-amino-acid chain: Arabinogalactan endo-beta-1,4-galactanase (332 aa).

Asn-111 carries N-linked (GlcNAc...) asparagine glycosylation. The active-site Proton donor is the Glu-135. Glu-245 (nucleophile) is an active-site residue.

Belongs to the glycosyl hydrolase 53 family.

It catalyses the reaction The enzyme specifically hydrolyzes (1-&gt;4)-beta-D-galactosidic linkages in type I arabinogalactans.. The polypeptide is Arabinogalactan endo-beta-1,4-galactanase (Thermothelomyces thermophilus (Myceliophthora thermophila)).